Consider the following 298-residue polypeptide: (S)-ureidoglycine aminohydrolase (298 aa).

A signal peptide spans 1–20 (MRSLYLIVFIVISLVKASKS). Residues 222–288 (TMDFQPGEFL…ALGKTRSRYL (67 aa)) enclose the Cupin type-2 domain. Mn(2+) contacts are provided by E235, H237, H241, and Q275. Position 235 (E235) interacts with substrate. Residues Q275, Y287, and K291 each contribute to the substrate site.

The protein belongs to the UGHY family. Homooctamer. The cofactor is Mn(2+).

It localises to the endoplasmic reticulum. The enzyme catalyses (S)-2-ureidoglycine + H2O = (S)-ureidoglycolate + NH4(+). Involved in the catabolism of purine nucleotides. Can use (S)-2-ureidoglycine as substrate, but not allantoate. The sequential activity of AAH, UGLYAH and UAH allows a complete purine breakdown without the intermediate generation of urea. The sequence is that of (S)-ureidoglycine aminohydrolase (UGLYAH) from Arabidopsis thaliana (Mouse-ear cress).